Consider the following 438-residue polypeptide: Methylenetetrahydrofolate--tRNA-(uracil-5-)-methyltransferase TrmFO (438 aa).

9 to 14 (GGGLAG) contacts FAD.

Belongs to the MnmG family. TrmFO subfamily. The cofactor is FAD.

The protein resides in the cytoplasm. The enzyme catalyses uridine(54) in tRNA + (6R)-5,10-methylene-5,6,7,8-tetrahydrofolate + NADH + H(+) = 5-methyluridine(54) in tRNA + (6S)-5,6,7,8-tetrahydrofolate + NAD(+). It carries out the reaction uridine(54) in tRNA + (6R)-5,10-methylene-5,6,7,8-tetrahydrofolate + NADPH + H(+) = 5-methyluridine(54) in tRNA + (6S)-5,6,7,8-tetrahydrofolate + NADP(+). Catalyzes the folate-dependent formation of 5-methyl-uridine at position 54 (M-5-U54) in all tRNAs. The sequence is that of Methylenetetrahydrofolate--tRNA-(uracil-5-)-methyltransferase TrmFO from Lactobacillus johnsonii (strain CNCM I-12250 / La1 / NCC 533).